Consider the following 1029-residue polypeptide: Carbamoyl phosphate synthase large chain (1029 aa).

The carboxyphosphate synthetic domain stretch occupies residues 1–402; it reads MPKRTDLQTI…SLQKALRSTE (402 aa). ATP-binding residues include Arg-129, Arg-169, Gly-175, Gly-176, Glu-208, Ile-210, Glu-215, Gly-241, Val-242, His-243, Gln-285, and Glu-299. The ATP-grasp 1 domain maps to 133–328; it reads QAAMKKIGVE…IAKIAALLAV (196 aa). Mg(2+) is bound by residues Gln-285, Glu-299, and Asn-301. Mn(2+)-binding residues include Gln-285, Glu-299, and Asn-301. Positions 403–544 are oligomerization domain; the sequence is SDIRGVYAEM…YHYSTYEWED (142 aa). Residues 545-929 are carbamoyl phosphate synthetic domain; the sequence is EVTGTDKPKV…AFYRAQLGAK (385 aa). One can recognise an ATP-grasp 2 domain in the interval 671-863; it reads NALCERLGLS…LAKSAARIAV (193 aa). The ATP site is built by Arg-707, Gln-747, Leu-749, Glu-754, Gly-779, Val-780, His-781, Ser-782, Gln-822, and Glu-834. The Mg(2+) site is built by Gln-822, Glu-834, and Asn-836. The Mn(2+) site is built by Gln-822, Glu-834, and Asn-836. The MGS-like domain occupies 930–1028; it reads SYLPLSGTAL…QDWQTQEAVA (99 aa). The interval 930–1029 is allosteric domain; the sequence is SYLPLSGTAL…DWQTQEAVAG (100 aa).

This sequence belongs to the CarB family. Composed of two chains; the small (or glutamine) chain promotes the hydrolysis of glutamine to ammonia, which is used by the large (or ammonia) chain to synthesize carbamoyl phosphate. Tetramer of heterodimers (alpha,beta)4. Requires Mg(2+) as cofactor. Mn(2+) serves as cofactor.

It catalyses the reaction hydrogencarbonate + L-glutamine + 2 ATP + H2O = carbamoyl phosphate + L-glutamate + 2 ADP + phosphate + 2 H(+). It carries out the reaction hydrogencarbonate + NH4(+) + 2 ATP = carbamoyl phosphate + 2 ADP + phosphate + 2 H(+). It functions in the pathway amino-acid biosynthesis; L-arginine biosynthesis; carbamoyl phosphate from bicarbonate: step 1/1. The protein operates within pyrimidine metabolism; UMP biosynthesis via de novo pathway; (S)-dihydroorotate from bicarbonate: step 1/3. Functionally, large subunit of the glutamine-dependent carbamoyl phosphate synthetase (CPSase). CPSase catalyzes the formation of carbamoyl phosphate from the ammonia moiety of glutamine, carbonate, and phosphate donated by ATP, constituting the first step of 2 biosynthetic pathways, one leading to arginine and/or urea and the other to pyrimidine nucleotides. The large subunit (synthetase) binds the substrates ammonia (free or transferred from glutamine from the small subunit), hydrogencarbonate and ATP and carries out an ATP-coupled ligase reaction, activating hydrogencarbonate by forming carboxy phosphate which reacts with ammonia to form carbamoyl phosphate. This Deinococcus deserti (strain DSM 17065 / CIP 109153 / LMG 22923 / VCD115) protein is Carbamoyl phosphate synthase large chain.